Consider the following 430-residue polypeptide: Sphingosine-1-phosphate phosphatase 1 (430 aa).

The disordered stretch occupies residues Ser-34–Thr-103. A Phosphoserine modification is found at Ser-101. Phosphothreonine is present on Thr-103. A run of 4 helical transmembrane segments spans residues Phe-121–Ile-141, Leu-152–Trp-172, Met-193–Tyr-213, and Trp-216–Leu-236. The tract at residues Lys-167 to Pro-175 is phosphatase sequence motif I. Residues Pro-194–His-197 form a phosphatase sequence motif II region. The Proton donor role is filled by His-197. A phosphatase sequence motif III region spans residues Ser-237–Asp-248. Catalysis depends on His-244, which acts as the Nucleophile. Transmembrane regions (helical) follow at residues Ile-246–Leu-266, Tyr-279–Asp-299, Ile-311–Ser-331, Val-348–Val-368, and Tyr-409–Ile-429.

The protein belongs to the type 2 lipid phosphate phosphatase family. In terms of tissue distribution, highly expressed in liver and kidney. Expressed in epidermis, in the stratum granulosum and the stratum spinosum.

It localises to the endoplasmic reticulum membrane. It is found in the cell membrane. It carries out the reaction sphinganine 1-phosphate + H2O = sphinganine + phosphate. The catalysed reaction is sphing-4-enine 1-phosphate + H2O = sphing-4-enine + phosphate. Inhibited by NaF, sodium orthovanadate, propanolol, and N-ethylmaleimide. Specifically dephosphorylates sphingosine 1-phosphate (S1P), dihydro-S1P, and phyto-S1P. Does not act on ceramide 1-phosphate, lysophosphatidic acid or phosphatidic acid. Sphingosine-1-phosphate phosphatase activity is needed for efficient recycling of sphingosine into the sphingolipid synthesis pathway. Regulates the intracellular levels of the bioactive sphingolipid metabolite S1P that regulates diverse biological processes acting both as an extracellular receptor ligand or as an intracellular second messenger. Involved in efficient ceramide synthesis from exogenous sphingoid bases. Converts S1P to sphingosine, which is readily metabolized to ceramide via ceramide synthase. In concert with sphingosine kinase 2 (SphK2), recycles sphingosine into ceramide through a phosphorylation/dephosphorylation cycle. Regulates endoplasmic-to-Golgi trafficking of ceramides, resulting in the regulation of ceramide levels in the endoplasmic reticulum, preferentially long-chain ceramide species, and influences the anterograde membrane transport of both ceramide and proteins from the endoplasmic reticulum to the Golgi apparatus. The modulation of intracellular ceramide levels in turn regulates apoptosis. Via S1P levels, modulates resting tone, intracellular Ca(2+) and myogenic vasoconstriction in resistance arteries. Also involved in unfolded protein response (UPR) and ER stress-induced autophagy via regulation of intracellular S1P levels. Involved in the regulation of epidermal homeostasis and keratinocyte differentiation. This chain is Sphingosine-1-phosphate phosphatase 1, found in Mus musculus (Mouse).